Reading from the N-terminus, the 534-residue chain is Cytochrome P450 monooxygenase vrtK (534 aa).

Residue Cys-448 participates in heme binding.

This sequence belongs to the cytochrome P450 family. Heme serves as cofactor.

It functions in the pathway secondary metabolite biosynthesis; terpenoid biosynthesis. Cytochrome P450 monooxygenase; part of the gene cluster that mediates the biosynthesis of viridicatumtoxin, a tetracycline-like fungal meroterpenoid with a unique, fused spirobicyclic ring system. The first step of the pathway is the production of the malonamoyl-CoA starter unit for the polyketide synthase vrtA. The aldolase vrtJ may be involved in the synthesis of the malonamate substrate for malonamoyl-CoA synthetase vrtB. The polyketide synthase vrtA then may utilize the malonamoyl-CoA starter unit, followed by sequential condensation of eight malonyl-CoA units to form the polyketide backbone. The cyclization of the last ring could be mediated by the lactamase-like protein vrtG. The proposed post-PKS tailoring steps are a hydroxylation at C5 catalyzed the cytochrome P450 monooxygenase vrtE, a hydroxylation at C12a catalyzed by VrtH and/or VrtI, and an O-methylation by the O-methyltransferase vrtF. VrtC is then proposed to catalyze the transfer of a geranyl group synthesized by vrtD to the aromatic C ring of the tetracyclic polyketide intermediate of viridicatumtoxin to yield previridicatumtoxin. Finally, the cytochrome P450 monooxygenase vrtK catalyzes the spirocyclization of the geranyl moiety of previridicatumtoxin to afford viridicatumtoxin. The chain is Cytochrome P450 monooxygenase vrtK from Penicillium aethiopicum.